We begin with the raw amino-acid sequence, 847 residues long: Ras GTPase-activating protein 2 (847 aa).

Over residues 1-21 (MAAAAPAAAASPEAPAVSGSA) the composition is skewed to low complexity. Residues 1-31 (MAAAAPAAAASPEAPAVSGSADPETGDEDSR) are disordered. Residue alanine 2 is modified to N-acetylalanine. C2 domains lie at 19–137 (GSAD…ETWF) and 148–288 (VQGK…QAWY). The region spanning 371-588 (NKLVPFITAV…TDVKKFLDEI (218 aa)) is the Ras-GAP domain. A Phosphoserine modification is found at serine 554. One can recognise a PH domain in the interval 603–704 (VHLKEGEMYK…WIDVLCRVSR (102 aa)). The segment at 706–742 (NHNRLSSFHPSAYLNGNWLCCQETSESTPGCKPCTAG) adopts a Btk-type zinc-finger fold. Zn(2+) is bound by residues histidine 714, cysteine 725, cysteine 726, and cysteine 736. A disordered region spans residues 819–847 (DEPHEKYRKKRSSSAKYGSKENPIVGKIS).

Its subcellular location is the cell membrane. Its function is as follows. Inhibitory regulator of the Ras-cyclic AMP pathway. Binds inositol tetrakisphosphate (IP4) and phospholipids. This chain is Ras GTPase-activating protein 2 (Rasa2), found in Mus musculus (Mouse).